The primary structure comprises 732 residues: uncharacterized protein (732 aa).

The region spanning 163–390 (YYTINELNYL…FGIVAKKKYE (228 aa)) is the TR mART core domain. Catalysis depends on residues R285, S309, and E354.

This is an uncharacterized protein from Acanthamoeba polyphaga mimivirus (APMV).